Consider the following 324-residue polypeptide: Lipoyl synthase (324 aa).

Positions 72, 77, 83, 98, 102, 105, and 313 each coordinate [4Fe-4S] cluster. One can recognise a Radical SAM core domain in the interval phenylalanine 84–leucine 302.

It belongs to the radical SAM superfamily. Lipoyl synthase family. It depends on [4Fe-4S] cluster as a cofactor.

Its subcellular location is the cytoplasm. The catalysed reaction is [[Fe-S] cluster scaffold protein carrying a second [4Fe-4S](2+) cluster] + N(6)-octanoyl-L-lysyl-[protein] + 2 oxidized [2Fe-2S]-[ferredoxin] + 2 S-adenosyl-L-methionine + 4 H(+) = [[Fe-S] cluster scaffold protein] + N(6)-[(R)-dihydrolipoyl]-L-lysyl-[protein] + 4 Fe(3+) + 2 hydrogen sulfide + 2 5'-deoxyadenosine + 2 L-methionine + 2 reduced [2Fe-2S]-[ferredoxin]. Its pathway is protein modification; protein lipoylation via endogenous pathway; protein N(6)-(lipoyl)lysine from octanoyl-[acyl-carrier-protein]: step 2/2. Functionally, catalyzes the radical-mediated insertion of two sulfur atoms into the C-6 and C-8 positions of the octanoyl moiety bound to the lipoyl domains of lipoate-dependent enzymes, thereby converting the octanoylated domains into lipoylated derivatives. The chain is Lipoyl synthase from Dichelobacter nodosus (strain VCS1703A).